Reading from the N-terminus, the 293-residue chain is ADP-forming sulfoacetate-CoA ligase subunit SauD (293 aa).

Residues 17-20 (TGKE), Lys43, and 96-98 (IAD) contribute to the CoA site. The Tele-phosphohistidine intermediate role is filled by His251.

This sequence belongs to the succinate/malate CoA ligase alpha subunit family. As to quaternary structure, forms a complex with SauC.

It carries out the reaction sulfoacetate + ATP + CoA = sulfoacetyl-CoA + ADP + phosphate. Functionally, involved in the degradation of sulfoacetate. Catalyzes the CoA- and ATP-dependent conversion of sulfoacetate to sulfoacetyl-CoA and ADP. Cannot use other sulfonic and carboxylic acids, and shows only residual activity with 3-sulfopropanoate and malonic acid. This chain is ADP-forming sulfoacetate-CoA ligase subunit SauD, found in Bilophila wadsworthia (strain 3_1_6).